Here is a 258-residue protein sequence, read N- to C-terminus: Methylthioribulose-1-phosphate dehydratase (258 aa).

The segment at methionine 1–aspartate 21 is disordered. Substrate is bound at residue cysteine 105. Zn(2+) contacts are provided by histidine 123 and histidine 125. The active-site Proton donor/acceptor is the glutamate 153. Histidine 210 serves as a coordination point for Zn(2+).

It belongs to the aldolase class II family. MtnB subfamily. It depends on Zn(2+) as a cofactor.

The protein localises to the cytoplasm. It carries out the reaction 5-(methylsulfanyl)-D-ribulose 1-phosphate = 5-methylsulfanyl-2,3-dioxopentyl phosphate + H2O. It participates in amino-acid biosynthesis; L-methionine biosynthesis via salvage pathway; L-methionine from S-methyl-5-thio-alpha-D-ribose 1-phosphate: step 2/6. In terms of biological role, catalyzes the dehydration of methylthioribulose-1-phosphate (MTRu-1-P) into 2,3-diketo-5-methylthiopentyl-1-phosphate (DK-MTP-1-P). The polypeptide is Methylthioribulose-1-phosphate dehydratase (Neurospora crassa (strain ATCC 24698 / 74-OR23-1A / CBS 708.71 / DSM 1257 / FGSC 987)).